The primary structure comprises 422 residues: UPF0761 membrane protein LHK_02978 (422 aa).

6 helical membrane passes run 44–64 (LLSLVPLITITLIVVAAFPVF), 102–122 (LTAVGLALLAFTSLSLMLTID), 141–161 (MLVYWTVLTLGPLLLGVGISG), 178–198 (LAGIIQNLGSLTLATVMLTVL), 212–232 (ALIGGALTALTLGVAQAGFGL), and 246–266 (AFATFPFLLIWLQLMWLTVLI).

Belongs to the UPF0761 family.

The protein resides in the cell inner membrane. The sequence is that of UPF0761 membrane protein LHK_02978 from Laribacter hongkongensis (strain HLHK9).